The sequence spans 436 residues: Eukaryotic peptide chain release factor subunit 1 (436 aa).

The protein belongs to the eukaryotic release factor 1 family. Heterodimer of two subunits, one of which binds GTP.

The protein resides in the cytoplasm. In terms of biological role, directs the termination of nascent peptide synthesis (translation) in response to the termination codon UGA. In L.striatus UAA and UAG codes for glutamine. The polypeptide is Eukaryotic peptide chain release factor subunit 1 (eRF1) (Loxodes striatus).